We begin with the raw amino-acid sequence, 126 residues long: MAYPADFKYTKEHEWISADGKIGITDHAQSSLGDIVFVELPKVGATITKGQSFGSVESVKAVSDLFAPVSGKVTAVNEELATTPEKVNTDAHAAWMVKVELTNPSELNDLLSAADYEKFAAEEAGH.

Residues 19–100 (DGKIGITDHA…AHAAWMVKVE (82 aa)) enclose the Lipoyl-binding domain. Lysine 60 is subject to N6-lipoyllysine.

It belongs to the GcvH family. The glycine cleavage system is composed of four proteins: P, T, L and H. It depends on (R)-lipoate as a cofactor.

Functionally, the glycine cleavage system catalyzes the degradation of glycine. The H protein shuttles the methylamine group of glycine from the P protein to the T protein. The chain is Glycine cleavage system H protein from Koribacter versatilis (strain Ellin345).